The primary structure comprises 200 residues: Small ribosomal subunit protein eS1 (200 aa).

It belongs to the eukaryotic ribosomal protein eS1 family.

This is Small ribosomal subunit protein eS1 from Thermococcus sibiricus (strain DSM 12597 / MM 739).